Consider the following 1238-residue polypeptide: DNA-directed RNA polymerase subunit beta (1238 aa).

Positions 1187 to 1238 (EGREDTPPEEVYEESYEEGFEEEIEELPEDIDFEPDSFDIENDDLDLEDFDI) are disordered. Residues 1193–1238 (PPEEVYEESYEEGFEEEIEELPEDIDFEPDSFDIENDDLDLEDFDI) are compositionally biased toward acidic residues.

Belongs to the RNA polymerase beta chain family. As to quaternary structure, the RNAP catalytic core consists of 2 alpha, 1 beta, 1 beta' and 1 omega subunit. When a sigma factor is associated with the core the holoenzyme is formed, which can initiate transcription.

It catalyses the reaction RNA(n) + a ribonucleoside 5'-triphosphate = RNA(n+1) + diphosphate. In terms of biological role, DNA-dependent RNA polymerase catalyzes the transcription of DNA into RNA using the four ribonucleoside triphosphates as substrates. The chain is DNA-directed RNA polymerase subunit beta from Thermoanaerobacter pseudethanolicus (strain ATCC 33223 / 39E) (Clostridium thermohydrosulfuricum).